The chain runs to 432 residues: Putative D-alanyl-D-alanine carboxypeptidase (432 aa).

A helical; Signal-anchor transmembrane segment spans residues 7-25; that stretch reads ATVLLTFSLSAFAVEYPVL.

It belongs to the peptidase S12 family. YfeW subfamily.

The protein localises to the cell inner membrane. It carries out the reaction Preferential cleavage: (Ac)2-L-Lys-D-Ala-|-D-Ala. Also transpeptidation of peptidyl-alanyl moieties that are N-acyl substituents of D-alanine.. In Salmonella agona (strain SL483), this protein is Putative D-alanyl-D-alanine carboxypeptidase.